The following is a 506-amino-acid chain: Ribose import ATP-binding protein RbsA 2 (506 aa).

2 ABC transporter domains span residues 5-241 and 254-498; these read LRLS…VGRR and ADAP…TAGT. 37 to 44 is an ATP binding site; it reads GENGAGKS.

The protein belongs to the ABC transporter superfamily. Ribose importer (TC 3.A.1.2.1) family. The complex is composed of an ATP-binding protein (RbsA), two transmembrane proteins (RbsC) and a solute-binding protein (RbsB).

It is found in the cell inner membrane. It catalyses the reaction D-ribose(out) + ATP + H2O = D-ribose(in) + ADP + phosphate + H(+). Its function is as follows. Part of the ABC transporter complex RbsABC involved in ribose import. Responsible for energy coupling to the transport system. This chain is Ribose import ATP-binding protein RbsA 2, found in Burkholderia cenocepacia (strain HI2424).